The following is a 495-amino-acid chain: RNA-binding KH domain-containing protein PEPPER (495 aa).

KH domains lie at 73–140 (DCVF…MDAV), 165–234 (FSSV…LEAI), and 340–403 (QVSQ…EQLI). The interval 474–495 (GQTYGSEYRPASDVGGYSSYNL) is disordered.

As to quaternary structure, interacts with HUA1 and HEN4. In terms of tissue distribution, detected in roots, shoots, leaves, flowers and fruits.

The protein resides in the nucleus. Functionally, regulates vegetative and gynoecium development. In concert with HUA2, antagonizes FLK by positively regulating FLC probably at transcriptional and post-transcriptional levels, and thus acts as a negative regulator of flowering. The chain is RNA-binding KH domain-containing protein PEPPER from Arabidopsis thaliana (Mouse-ear cress).